A 461-amino-acid polypeptide reads, in one-letter code: MEENNDKLATNSYVNLFINRHEHAPTYSIITHGCQMNEHDSEKIKTLLENMGFEKSDEKLDADFIIFNTCLVRENAEMKVYGQLGALKNLKRENPDMLIAVCGCMMQTGPARDIIREKYPQVDIVFGVNNINSLPYLIDRHLSSGKLVVDIERKDDIDEDITIKRDNEYVGYVNIMTGCNNFCTYCIVPYARGREQSRSVESILSEVKRMVDQGYKDITLLGQNVNSYGKTLENPVTFTELLTKVNDVEGLERLRFLTSHPKDISDELIEAMGKLDKVCENIHLPFQAGSNSVLERMHRRYTKESYLEKVEKLKKSVKGITFSTDIIVGFPGETEEDFQDTLDVVRKVGYEQAFTFKYNRRPGTKADLFEDQVDEDVKQDRLERLLDVAYPIFYEKNKSYLGTIQEVLIEGESKNNPEVMTGRTRTFKLVNVKCDKSYIGKLVNTKIVDFNSFALTGEMVD.

Positions 25–143 (PTYSIITHGC…LPYLIDRHLS (119 aa)) constitute an MTTase N-terminal domain. C34, C70, C104, C179, C183, and C186 together coordinate [4Fe-4S] cluster. The Radical SAM core domain occupies 165–395 (RDNEYVGYVN…LDVAYPIFYE (231 aa)). In terms of domain architecture, TRAM spans 398–461 (KSYLGTIQEV…SFALTGEMVD (64 aa)).

Belongs to the methylthiotransferase family. MiaB subfamily. As to quaternary structure, monomer. [4Fe-4S] cluster serves as cofactor.

The protein localises to the cytoplasm. The catalysed reaction is N(6)-dimethylallyladenosine(37) in tRNA + (sulfur carrier)-SH + AH2 + 2 S-adenosyl-L-methionine = 2-methylsulfanyl-N(6)-dimethylallyladenosine(37) in tRNA + (sulfur carrier)-H + 5'-deoxyadenosine + L-methionine + A + S-adenosyl-L-homocysteine + 2 H(+). Catalyzes the methylthiolation of N6-(dimethylallyl)adenosine (i(6)A), leading to the formation of 2-methylthio-N6-(dimethylallyl)adenosine (ms(2)i(6)A) at position 37 in tRNAs that read codons beginning with uridine. In Finegoldia magna (strain ATCC 29328 / DSM 20472 / WAL 2508) (Peptostreptococcus magnus), this protein is tRNA-2-methylthio-N(6)-dimethylallyladenosine synthase.